We begin with the raw amino-acid sequence, 156 residues long: Pre-mRNA-splicing factor SNT309 (156 aa).

In terms of assembly, associated with the spliceosome.

The protein resides in the nucleus. In terms of biological role, involved in pre-mRNA splicing. The polypeptide is Pre-mRNA-splicing factor SNT309 (SNT309) (Candida glabrata (strain ATCC 2001 / BCRC 20586 / JCM 3761 / NBRC 0622 / NRRL Y-65 / CBS 138) (Yeast)).